Here is a 315-residue protein sequence, read N- to C-terminus: G-box-binding factor 1 (315 aa).

Disordered regions lie at residues 1–56 (MGTS…GSPS) and 93–268 (MPMP…RDEL). Residues 46–56 (PFFPSPVGSPS) show a composition bias toward pro residues. 2 stretches are compositionally biased toward polar residues: residues 133-164 (GSGN…QEQG) and 178-187 (ASSQSTTGEI). The 64-residue stretch at 222-285 (ELKRQKRKQS…DKLKSENNSI (64 aa)) folds into the bZIP domain. Residues 224-243 (KRQKRKQSNRESARRSRLRK) are basic motif. Positions 249–262 (QLQQRVESLSNENQ) are enriched in polar residues. The segment at 250-285 (LQQRVESLSNENQSLRDELQRLSSECDKLKSENNSI) is leucine-zipper.

Belongs to the bZIP family. In terms of assembly, monomer and heterodimers with BZIP16 and BZIP68. Interacts with GIP1. In terms of processing, phosphorylated by CK2. Found in both light and dark grown leaves.

The protein localises to the nucleus. Its function is as follows. Binds to the G-box motif (5'-CCACGTGG-3') of the rbcS-1A gene promoter. G-box and G-box-like motifs are cis-acting elements defined in promoters of certain plant genes which are regulated by such diverse stimuli as light-induction or hormone control. Binds to the G-box motif 5'-CACGTG-3' of LHCB2.4 (At3g27690) promoter. May act as transcriptional activator in light-regulated expression of LHCB2.4. Probably binds DNA as monomer. DNA-binding activity is redox-dependent. The chain is G-box-binding factor 1 (GBF1) from Arabidopsis thaliana (Mouse-ear cress).